We begin with the raw amino-acid sequence, 385 residues long: Deoxyguanosinetriphosphate triphosphohydrolase-like protein (385 aa).

The region spanning 62 to 197 (RLTHSLEVAQ…VSLADDIAYS (136 aa)) is the HD domain.

Belongs to the dGTPase family. Type 2 subfamily.

The polypeptide is Deoxyguanosinetriphosphate triphosphohydrolase-like protein (Neorickettsia sennetsu (strain ATCC VR-367 / Miyayama) (Ehrlichia sennetsu)).